Reading from the N-terminus, the 156-residue chain is CRIB domain-containing protein RIC11 (156 aa).

The 14-residue stretch at 26-39 folds into the CRIB domain; that stretch reads IGHPTEVKHVAHIG. The segment at 87–156 is disordered; sequence QDQLNISDRI…SMVSRLNSNA (70 aa). Residues 109–120 are compositionally biased toward basic residues; sequence IHTKSKNRRKKP. Residues 121–142 show a composition bias toward low complexity; that stretch reads SSTSSPRSRPSPKSSRSMGLSK.

Functions as a downstream effector of Rho-related GTP binding proteins of the 'Rho of Plants' (ROPs) family. Participates in the propagation of ROP GTPase signals in specific cellular responses. In Arabidopsis thaliana (Mouse-ear cress), this protein is CRIB domain-containing protein RIC11 (RIC11).